The following is a 1094-amino-acid chain: Formin-like protein 1 (1094 aa).

Disordered regions lie at residues 1 to 29, 173 to 199, and 507 to 627; these read MGNA…KQPM, SGAE…VPKS, and AATP…GVKA. The N-myristoyl glycine moiety is linked to residue G2. Phosphoserine is present on S7. The span at 16–28 shows a compositional bias: pro residues; it reads ASPPKQPAVPKQP. The 438-residue stretch at 27 to 464 folds into the GBD/FH3 domain; it reads QPMPAAGELE…SRRIPEPEKV (438 aa). S184 carries the post-translational modification Phosphoserine. The segment covering 519-529 has biased composition (polar residues); sequence RVSTDSPSTAE. Composition is skewed to pro residues over residues 535–549 and 559–610; these read ASPP…PPLP and PSAP…PGGP. One can recognise an FH2 domain in the interval 627–1018; that stretch reads AKKPIQTKFR…DTSGREEPPT (392 aa). At S688 the chain carries Phosphoserine. The segment covering 1002 to 1017 has biased composition (basic and acidic residues); the sequence is WKKEAAADTSGREEPP. Positions 1002–1094 are disordered; it reads WKKEAAADTS…PLPVTTDLAL (93 aa). The residue at position 1021 (S1021) is a Phosphoserine. The region spanning 1049–1082 is the DAD domain; that stretch reads SDRDGAIEDIITDLRNQPYIRADTGRRSARRRPP.

The protein belongs to the formin homology family. As to quaternary structure, interacts with RAC1, PFN1 and PFN2. Interacts (activated by RAC1) with SRGAP2 (via SH3 domain); regulates the actin filament severing activity of FMNL1. Myristoylation mediates membrane localization. In terms of tissue distribution, highly expressed in the spleen, lymph node and bone marrow cells.

The protein resides in the cytoplasm. It is found in the cell membrane. The protein localises to the cytoplasmic vesicle. Its subcellular location is the phagosome. In terms of biological role, plays a role in the regulation of cell morphology and cytoskeletal organization. Required in the cortical actin filament dynamics and cell shape. May play a role in the control of cell motility and survival of macrophages. The polypeptide is Formin-like protein 1 (Fmnl1) (Mus musculus (Mouse)).